A 290-amino-acid polypeptide reads, in one-letter code: Undecaprenyl-diphosphatase (290 aa).

The next 8 membrane-spanning stretches (helical) occupy residues 1 to 21 (MFLL…LTEF), 48 to 68 (SAFT…AWVF), 101 to 121 (IHVL…DDLI), 125 to 145 (LFSV…MIIA), 161 to 181 (INYF…WPGF), 202 to 222 (SDFT…LSLL), 231 to 251 (AHIP…LIAI), and 266 to 286 (FAIY…GFGI).

It belongs to the UppP family.

Its subcellular location is the cell membrane. The enzyme catalyses di-trans,octa-cis-undecaprenyl diphosphate + H2O = di-trans,octa-cis-undecaprenyl phosphate + phosphate + H(+). Functionally, catalyzes the dephosphorylation of undecaprenyl diphosphate (UPP). Confers resistance to bacitracin. This is Undecaprenyl-diphosphatase from Staphylococcus epidermidis (strain ATCC 35984 / DSM 28319 / BCRC 17069 / CCUG 31568 / BM 3577 / RP62A).